The following is a 623-amino-acid chain: Sulfite reductase [NADPH] flavoprotein alpha-component (623 aa).

Residues 1–32 (MSFQKNEYSHKNVSEDNNGQGGNPPIASPLND) form a disordered region. In terms of domain architecture, Flavodoxin-like spans 87 to 225 (LTIIFASQTG…AAEEWRKNAL (139 aa)). FMN-binding positions include 93 to 98 (SQTGNA), 140 to 143 (STNG), and 176 to 185 (LGDSSYEFFC). The FAD-binding FR-type domain occupies 258–472 (QNPYTATLLT…VEHNNNFKLP (215 aa)). FAD-binding positions include T346, A380, 410 to 413 (RLYS), 428 to 430 (TVG), Y434, and 443 to 446 (GGAS). NADP(+) contacts are provided by residues 543 to 544 (SR), 549 to 553 (KVYVQ), and D585. Y623 contacts FAD.

The protein belongs to the NADPH-dependent sulphite reductase flavoprotein subunit CysJ family. This sequence in the N-terminal section; belongs to the flavodoxin family. It in the C-terminal section; belongs to the flavoprotein pyridine nucleotide cytochrome reductase family. In terms of assembly, alpha(8)-beta(8). The alpha component is a flavoprotein, the beta component is a hemoprotein. FAD is required as a cofactor. FMN serves as cofactor.

The enzyme catalyses hydrogen sulfide + 3 NADP(+) + 3 H2O = sulfite + 3 NADPH + 4 H(+). The protein operates within sulfur metabolism; hydrogen sulfide biosynthesis; hydrogen sulfide from sulfite (NADPH route): step 1/1. Its function is as follows. Component of the sulfite reductase complex that catalyzes the 6-electron reduction of sulfite to sulfide. This is one of several activities required for the biosynthesis of L-cysteine from sulfate. The flavoprotein component catalyzes the electron flow from NADPH -&gt; FAD -&gt; FMN to the hemoprotein component. The chain is Sulfite reductase [NADPH] flavoprotein alpha-component from Vibrio parahaemolyticus serotype O3:K6 (strain RIMD 2210633).